The sequence spans 239 residues: Small ribosomal subunit protein uS3c (239 aa).

In terms of domain architecture, KH type-2 spans 43–139 (IKNYIQKNRK…RLNISIEKVK (97 aa)). The tract at residues 50 to 80 (NRKKGSNRKIESDSSSEVITHNRKTDSGSSS) is disordered.

This sequence belongs to the universal ribosomal protein uS3 family. As to quaternary structure, part of the 30S ribosomal subunit.

The protein localises to the plastid. It localises to the chloroplast. The sequence is that of Small ribosomal subunit protein uS3c (rps3) from Agrostis stolonifera (Creeping bentgrass).